The following is a 1033-amino-acid chain: Immunoglobulin superfamily member 2 (1033 aa).

Residues 1–20 (MACILCVASLFLSLTKFSIG) form the signal peptide. Residues 21-970 (QREVKIQEGP…VSSLICSSGP (950 aa)) lie on the Extracellular side of the membrane. 7 Ig-like C2-type domains span residues 22–141 (REVK…TNLT), 144–266 (PDTL…TLIT), 279–388 (PAAR…TQMG), 408–529 (PAAR…QKIS), 539–657 (LRVN…ARVS), 670–797 (PESK…RKTS), and 806–941 (PTGS…KWIN). C43 and C121 are joined by a disulfide. N-linked (GlcNAc...) asparagine glycosylation occurs at N139. C168 and C249 are oxidised to a cystine. An EWI motif motif is present at residues 253–255 (EWI). Intrachain disulfides connect C304–C377, C432–C509, and C560–C638. N677 is a glycosylation site (N-linked (GlcNAc...) asparagine). Disulfide bonds link C695/C776 and C832/C925. The chain crosses the membrane as a helical span at residues 971 to 991 (LLHFLIVCPFVMLLLLATSFL). Topologically, residues 992 to 1033 (CLYRKARKLSQLSLSAKKEKALWVGMRKTSLQKEAGEESGHY) are cytoplasmic.

Post-translationally, N-glycosylated.

It localises to the membrane. Plays a role as inhibitor of T-cells proliferation induced by CD3. Inhibits expression of IL2RA on activated T-cells and secretion of IL2. Inhibits tyrosine kinases that are required for IL2 production and cellular proliferation. Inhibits phospholipase C-gamma-1/PLCG1 phosphorylation and subsequent CD3-induced changes in intracellular free calcium. Prevents nuclear translocation of nuclear factor of activated T-cell to the nucleus. Plays a role in the inhibition of T-cell proliferation via IL10 secretion by cutaneous dendritic cells. The protein is Immunoglobulin superfamily member 2 (Cd101) of Mus musculus (Mouse).